A 209-amino-acid chain; its full sequence is Ubiquitin-conjugating enzyme E2 S (209 aa).

In terms of domain architecture, UBC core spans 14 to 160 (QTIRQVMREL…ARMMTEIHAQ (147 aa)). Cysteine 98 acts as the Glycyl thioester intermediate in catalysis. Residues 164–209 (CAAGAAGDSKDDDGPSTKKHAGLDKKLQDKKKEKLLKEKKRMLKRL) are disordered. Over residues 171-199 (DSKDDDGPSTKKHAGLDKKLQDKKKEKLL) the composition is skewed to basic and acidic residues. The span at 200 to 209 (KEKKRMLKRL) shows a compositional bias: basic residues.

This sequence belongs to the ubiquitin-conjugating enzyme family.

It carries out the reaction S-ubiquitinyl-[E1 ubiquitin-activating enzyme]-L-cysteine + [E2 ubiquitin-conjugating enzyme]-L-cysteine = [E1 ubiquitin-activating enzyme]-L-cysteine + S-ubiquitinyl-[E2 ubiquitin-conjugating enzyme]-L-cysteine.. The protein operates within protein modification; protein ubiquitination. Its function is as follows. Catalyzes the covalent attachment of ubiquitin to other proteins. Acts as an essential factor of the anaphase promoting complex/cyclosome (APC/C), a cell cycle-regulated ubiquitin ligase that controls progression through mitosis. Acts by specifically elongating polyubiquitin chains initiated by the E2 enzyme vih/UbcH10 on APC/C substrates, enhancing the degradation of APC/C substrates by the proteasome and promoting mitotic exit. The sequence is that of Ubiquitin-conjugating enzyme E2 S from Drosophila ananassae (Fruit fly).